A 36-amino-acid chain; its full sequence is Photosystem II reaction center protein Psb30 (36 aa).

A helical transmembrane segment spans residues 8 to 28; sequence IIAQLTVVTLTLLAGPVIVFL.

The protein belongs to the Psb30/Ycf12 family. PSII is composed of 1 copy each of membrane proteins PsbA, PsbB, PsbC, PsbD, PsbE, PsbF, PsbH, PsbI, PsbJ, PsbK, PsbL, PsbM, PsbT, PsbX, PsbY, PsbZ, Psb30/Ycf12, peripheral proteins of the oxygen-evolving complex and a large number of cofactors. It forms dimeric complexes.

It localises to the plastid. The protein resides in the cyanelle thylakoid membrane. Its function is as follows. A core subunit of photosystem II (PSII), probably helps stabilize the reaction center. In Cyanophora paradoxa, this protein is Photosystem II reaction center protein Psb30.